Reading from the N-terminus, the 372-residue chain is 4-hydroxy-3-methylbut-2-en-1-yl diphosphate synthase (flavodoxin) (372 aa).

[4Fe-4S] cluster contacts are provided by Cys-270, Cys-273, Cys-305, and Glu-312.

Belongs to the IspG family. [4Fe-4S] cluster serves as cofactor.

It carries out the reaction (2E)-4-hydroxy-3-methylbut-2-enyl diphosphate + oxidized [flavodoxin] + H2O + 2 H(+) = 2-C-methyl-D-erythritol 2,4-cyclic diphosphate + reduced [flavodoxin]. It functions in the pathway isoprenoid biosynthesis; isopentenyl diphosphate biosynthesis via DXP pathway; isopentenyl diphosphate from 1-deoxy-D-xylulose 5-phosphate: step 5/6. Functionally, converts 2C-methyl-D-erythritol 2,4-cyclodiphosphate (ME-2,4cPP) into 1-hydroxy-2-methyl-2-(E)-butenyl 4-diphosphate. The protein is 4-hydroxy-3-methylbut-2-en-1-yl diphosphate synthase (flavodoxin) of Marinobacter nauticus (strain ATCC 700491 / DSM 11845 / VT8) (Marinobacter aquaeolei).